Reading from the N-terminus, the 442-residue chain is Ribosomal protein uS12 methylthiotransferase RimO (442 aa).

The MTTase N-terminal domain maps to 8 to 118 (PKVGFVSLGC…VLGHVHKYVE (111 aa)). 6 residues coordinate [4Fe-4S] cluster: C17, C53, C82, C150, C154, and C157. The region spanning 136 to 373 (LTPRHYAYLK…MELQQQVSIR (238 aa)) is the Radical SAM core domain. The TRAM domain occupies 376–442 (ARKVGKEMLV…EYDLWASLID (67 aa)).

It belongs to the methylthiotransferase family. RimO subfamily. It depends on [4Fe-4S] cluster as a cofactor.

The protein localises to the cytoplasm. The catalysed reaction is L-aspartate(89)-[ribosomal protein uS12]-hydrogen + (sulfur carrier)-SH + AH2 + 2 S-adenosyl-L-methionine = 3-methylsulfanyl-L-aspartate(89)-[ribosomal protein uS12]-hydrogen + (sulfur carrier)-H + 5'-deoxyadenosine + L-methionine + A + S-adenosyl-L-homocysteine + 2 H(+). Catalyzes the methylthiolation of an aspartic acid residue of ribosomal protein uS12. The polypeptide is Ribosomal protein uS12 methylthiotransferase RimO (Aeromonas hydrophila subsp. hydrophila (strain ATCC 7966 / DSM 30187 / BCRC 13018 / CCUG 14551 / JCM 1027 / KCTC 2358 / NCIMB 9240 / NCTC 8049)).